Here is a 177-residue protein sequence, read N- to C-terminus: Superoxide dismutase [Cu-Zn] 1 (177 aa).

An N-terminal signal peptide occupies residues 1–20; the sequence is MKYTILSLVAGALISCSAMA. The Cu cation site is built by H69, H71, and H94. Residues C76 and C172 are joined by a disulfide bond. Positions 94, 103, 112, and 115 each coordinate Zn(2+). H150 lines the Cu cation pocket.

It belongs to the Cu-Zn superoxide dismutase family. In terms of assembly, monomer. Cu cation is required as a cofactor. It depends on Zn(2+) as a cofactor.

The protein localises to the periplasm. It catalyses the reaction 2 superoxide + 2 H(+) = H2O2 + O2. Its function is as follows. Destroys radicals which are normally produced within the cells and which are toxic to biological systems. This Salmonella typhimurium (strain 4/74) protein is Superoxide dismutase [Cu-Zn] 1 (sodC1).